A 207-amino-acid polypeptide reads, in one-letter code: Small ribosomal subunit protein eS1 (207 aa).

It belongs to the eukaryotic ribosomal protein eS1 family.

The polypeptide is Small ribosomal subunit protein eS1 (Methanosarcina barkeri (strain Fusaro / DSM 804)).